The primary structure comprises 591 residues: Putative BTB/POZ domain-containing protein At5g13600 (591 aa).

A BTB domain is found at 28–95 (PDVMIQVVDE…CYGVRIEVTP (68 aa)). An NPH3 domain is found at 208 to 493 (NWWFNDVSSF…VQVLFFEQMR (286 aa)). A Phosphotyrosine modification is found at Y434.

The protein belongs to the NPH3 family.

The protein operates within protein modification; protein ubiquitination. Its function is as follows. May act as a substrate-specific adapter of an E3 ubiquitin-protein ligase complex (CUL3-RBX1-BTB) which mediates the ubiquitination and subsequent proteasomal degradation of target proteins. The protein is Putative BTB/POZ domain-containing protein At5g13600 of Arabidopsis thaliana (Mouse-ear cress).